A 463-amino-acid chain; its full sequence is Aurantioclavine synthase cnsA (463 aa).

The 184-residue stretch at 16-199 folds into the FAD-binding PCMH-type domain; the sequence is ERFNQRGNVF…TQATVRVFPD (184 aa).

The protein belongs to the oxygen-dependent FAD-linked oxidoreductase family. Requires FAD as cofactor.

It functions in the pathway alkaloid biosynthesis. In terms of biological role, FAD-linked oxidoreductase; part of the gene cluster that mediates the biosynthesis of communesins, a prominent class of indole alkaloids with great potential as pharmaceuticals. Communesins are biosynthesized by the coupling of tryptamine and aurantioclavine, two building blocks derived from L-tryptophan. The L-tryptophan decarboxylase cnsB converts L-tryptophan to tryptamine, whereas the tryptophan dimethylallyltransferase cnsF converts L-tryptophan to 4-dimethylallyl tryptophan which is further transformed to aurantioclavine by the aurantioclavine synthase cnsA, probably aided by the catalase cnsD. The cytochrome P450 monooxygenase cnsC catalyzes the heterodimeric coupling between the two different indole moieties, tryptamine and aurantioclavine, to construct vicinal quaternary stereocenters and yield the heptacyclic communesin scaffold. The O-methyltransferase cnsE then methylates the communesin scaffold to produce communesin K, the simplest characterized communesin that contains the heptacyclic core. The dioxygenase cnsJ converts communesin K into communesin I. Acylation to introduce the hexadienyl group at position N16 of communesin I by the acyltransferase cnsK leads to the production of communesin B. The hexadienyl group is produced by the highly reducing polyketide synthase cnsI, before being hydrolytically removed from cnsI by the serine hydrolase cnsH, converted into hexadienyl-CoA by the CoA ligase cnsG, and then transferred to communesin I by cnsK. Surprisingly, cnsK may also be a promiscuous acyltransferase that can tolerate a range of acyl groups, including acetyl-, propionyl-, and butyryl-CoA, which lead to communesins A, G and H respectively. The roles of the alpha-ketoglutarate-dependent dioxygenases cnsM and cnsP have still to be determined. The sequence is that of Aurantioclavine synthase cnsA from Penicillium expansum (Blue mold rot fungus).